Consider the following 404-residue polypeptide: G-protein coupled receptor 182 (404 aa).

Residues 1 to 57 (MSVKPSWGPGPSEGVTAVPTSDLGEIHNWTELLDLFNHTLSECHVELSQSTKRVVLF) are Extracellular-facing. N-linked (GlcNAc...) asparagine glycosylation is found at Asn28 and Asn37. The chain crosses the membrane as a helical span at residues 58–79 (ALYLAMFVVGLVENLLVICVNW). Residues 80-90 (RGSGRAGLMNL) lie on the Cytoplasmic side of the membrane. The chain crosses the membrane as a helical span at residues 91-113 (YILNMAIADLGIVLSLPVWMLEV). The Extracellular segment spans residues 114–127 (TLDYTWLWGSFSCR). The cysteines at positions 126 and 202 are disulfide-linked. A helical transmembrane segment spans residues 128-149 (FTHYFYFVNMYSSIFFLVCLSV). The Cytoplasmic segment spans residues 150–170 (DRYVTLTSASPSWQRYQHRVR). A helical membrane pass occupies residues 171 to 193 (RAMCAGIWVLSAIIPLPEVVHIQ). Residues 194–217 (LVEGPEPMCLFMAPFETYSTWALA) lie on the Extracellular side of the membrane. The helical transmembrane segment at 218–239 (VALSTTILGFLLPFPLITVFNV) threads the bilayer. Residues 240–258 (LTACRLRQPGQPKSRRHCL) are Cytoplasmic-facing. A helical membrane pass occupies residues 259–280 (LLCAYVAVFVMCWLPYHVTLLL). The Extracellular portion of the chain corresponds to 281 to 299 (LTLHGTHISLHCHLVHLLY). Residues 300-320 (FFYDVIDCFSMLHCVINPILY) traverse the membrane as a helical segment. The Cytoplasmic portion of the chain corresponds to 321 to 404 (NFLSPHFRGR…ISPTQPLTPS (84 aa)).

This sequence belongs to the G-protein coupled receptor 1 family. In terms of tissue distribution, highly expressed in heart, skeletal muscle, immune system, adrenal gland and liver.

It localises to the cell membrane. Functionally, orphan receptor. This chain is G-protein coupled receptor 182 (GPR182), found in Homo sapiens (Human).